Consider the following 500-residue polypeptide: Probable malate:quinone oxidoreductase (500 aa).

This sequence belongs to the MQO family. FAD is required as a cofactor.

It catalyses the reaction (S)-malate + a quinone = a quinol + oxaloacetate. It functions in the pathway carbohydrate metabolism; tricarboxylic acid cycle; oxaloacetate from (S)-malate (quinone route): step 1/1. This Bacillus cereus (strain AH187) protein is Probable malate:quinone oxidoreductase.